Reading from the N-terminus, the 315-residue chain is 4-diphosphocytidyl-2-C-methyl-D-erythritol kinase (315 aa).

Lys26 is a catalytic residue. An ATP-binding site is contributed by Pro111–Ala121. The active site involves Asp153.

The protein belongs to the GHMP kinase family. IspE subfamily.

It catalyses the reaction 4-CDP-2-C-methyl-D-erythritol + ATP = 4-CDP-2-C-methyl-D-erythritol 2-phosphate + ADP + H(+). It participates in isoprenoid biosynthesis; isopentenyl diphosphate biosynthesis via DXP pathway; isopentenyl diphosphate from 1-deoxy-D-xylulose 5-phosphate: step 3/6. Catalyzes the phosphorylation of the position 2 hydroxy group of 4-diphosphocytidyl-2C-methyl-D-erythritol. In Salinispora arenicola (strain CNS-205), this protein is 4-diphosphocytidyl-2-C-methyl-D-erythritol kinase.